The sequence spans 451 residues: CCAAT/enhancer-binding protein (451 aa).

Disordered regions lie at residues 210–236 (TYNNHSSDENSSVGSDSSSTIKEEPID), 267–298 (QSNNLSNNNSSSNNSSNNSSNNSSNSNTNSTN), and 328–389 (LKHH…AKVR). Low complexity-rich tracts occupy residues 218-228 (ENSSVGSDSSS), 268-298 (SNNLSNNNSSSNNSSNNSSNNSSNSNTNSTN), and 334-350 (LQQTQQQHAQQQQQHAQ). The segment covering 359–370 (KHVDKGTEEYRR) has biased composition (basic and acidic residues). The bZIP domain occupies 365 to 428 (TEEYRRRRER…SLHKQIYMQL (64 aa)). The basic motif stretch occupies residues 369–398 (RRRRERNNIAVRKSREKAKVRSKEVEERVK). Residues 400–407 (LLKEKDAL) are leucine-zipper.

It belongs to the bZIP family. C/EBP subfamily. As to quaternary structure, binds DNA as a dimer and can form stable heterodimers.

Its subcellular location is the nucleus. May be required for the expression of gene products mediating border cell migration. Among the DNA sequences that this protein binds with high affinity is a conserved site within the promoter of its gene. The protein is CCAAT/enhancer-binding protein (slbo) of Drosophila virilis (Fruit fly).